The primary structure comprises 490 residues: COP9 signalosome complex subunit 2 (490 aa).

Acidic residues predominate over residues 1 to 30 (MSDDDFMQDSDQEYDFEYEDDEEEDTGDVD). Positions 1-32 (MSDDDFMQDSDQEYDFEYEDDEEEDTGDVDIE) are disordered. Residues 250–418 (SEENWKEAQS…GVLELESRED (169 aa)) form the PCI domain. Residues 469–490 (DTMRSMGSGKRGRRVGLTQRAY) are disordered.

This sequence belongs to the CSN2 family. In terms of assembly, component of the COP9 signalosome (CSN) complex.

It is found in the cytoplasm. The protein resides in the nucleus. Functionally, component of the COP9 signalosome (CSN) complex that acts as an regulator of the ubiquitin (Ubl) conjugation pathway by mediating the deneddylation of the cullin subunit of SCF-type E3 ubiquitin-protein ligase complexes. The CSN complex is involved in the regulation of the circadian clock through its control of the stability of the SCF(FWD-1) complex. This chain is COP9 signalosome complex subunit 2 (csn-2), found in Neurospora crassa (strain ATCC 24698 / 74-OR23-1A / CBS 708.71 / DSM 1257 / FGSC 987).